The following is a 1029-amino-acid chain: Toll-like receptor 9 (1029 aa).

A signal peptide spans 1–24 (MGPYCAPHPLSLLVQAAALAAALA). At 25–815 (QGTLPAFLPC…LCLDETLSLD (791 aa)) the chain is on the extracellular side. Cys-34 and Cys-44 form a disulfide bridge. 46-50 (WLFLK) serves as a coordination point for DNA. LRR repeat units lie at residues 61–84 (RANVTSLSLISNRIHHLHDSDFVH), 86–109 (SNLRVLNLKWNCPPAGLSPMHFPC), 121–146 (VPTLEELNLSYNGITTVPALPSSLVS), 149–165 (LSRTSILVLGPTHFTGL), 166–189 (HALRFLYMDGNCYYKNPCQQAVEV), 197–220 (LGNLTHLSLKYNNLTEVPRRLPPS), 222–241 (DTLLLSYNHIITLAPEDLAN), 242–267 (LTALRVLDVGGNCRRCDHARNPCREC), 282–305 (LSRLEGLVLKDSSLYKLEKDWFRG), 307–331 (GRLQVLDLSENFLYDYITKTTIFRN), 332–355 (LTQLRRLNLSFNYHKKVSFAHLQL), 362–385 (LVSLEKLDMHGIFFRSLTNTTLRP), 389–412 (LPKLQSLSLQLNFINQAELSIFGA), 414–439 (PSLLFVDLSDNRISGAARPVAALGEV), 469–492 (CNLNFTLDLSRNNLVTIQQEMFTR), 494–517 (SRLQCLRLSHNSISQAVNGSQFVP), 518–541 (LTRLRVLDLSYNKLDLYHGRSFTE), 543–570 (PQLEALDLSYNSQPFSMQGVGHNLSFVA), 572–596 (LPSLRYLSLAHNGIHSRVSQKLSSA), 598–620 (LRALDFSGNSLSQMWAEGDLYLC), 625–648 (LRNLVQLDLSKNHLHTLLPRHLDN), 650–673 (PKSLRQLRLRDNNLAFFNWSSLTV), 674–697 (LPQLEALDLAGNQLKALSNGSLPP), 699–721 (TRLQKLDVSSNSIGFVTPGFFVL), 722–745 (ANRLKELNLSANALKTVDPFWFGR), and 747–770 (TETLKILDVSANPLHCACGAAFVD). Asn-63 carries an N-linked (GlcNAc...) asparagine glycan. DNA contacts are provided by residues 71–76 (SNRIHH) and 94–108 (KWNCPPAGLSPMHFP). Cys-97 and Cys-109 form a disulfide bridge. The N-linked (GlcNAc...) asparagine glycan is linked to Asn-128. DNA contacts are provided by residues Tyr-131, Arg-151, and 178–180 (YYK). A disulfide bridge connects residues Cys-177 and Cys-183. A glycan (N-linked (GlcNAc...) asparagine) is linked at Asn-199. Tyr-207 is a binding site for DNA. N-linked (GlcNAc...) asparagine glycosylation is found at Asn-209 and Asn-241. 2 cysteine pairs are disulfide-bonded: Cys-254-Cys-267 and Cys-257-Cys-264. Cys-257 carries S-palmitoyl cysteine lipidation. DNA is bound at residue Arg-261. Cys-264 carries S-palmitoyl cysteine lipidation. Asn-331, Asn-339, and Asn-380 each carry an N-linked (GlcNAc...) asparagine glycan. Cysteines 469 and 498 form a disulfide. N-linked (GlcNAc...) asparagine glycans are attached at residues Asn-472 and Asn-511. Asn-565 carries an N-linked (GlcNAc...) asparagine glycan. 2 N-linked (GlcNAc...) asparagine glycosylation sites follow: Asn-667 and Asn-692. A glycan (N-linked (GlcNAc...) asparagine) is linked at Asn-729. Intrachain disulfides connect Cys-762–Cys-788 and Cys-764–Cys-807. Residues 816 to 836 (CFGFSLLMVALGLAVPMLHHL) form a helical membrane-spanning segment. Over 837 to 1029 (CGWDLWYCFH…NFCRGPTTAE (193 aa)) the chain is Cytoplasmic. Positions 864–1009 (LLYDAFVVFD…SFWANLGMAL (146 aa)) constitute a TIR domain.

Belongs to the Toll-like receptor family. As to quaternary structure, monomer and homodimer. Exists as a monomer in the absence of unmethylated cytidine-phosphate-guanosine (CpG) ligand. Proteolytic processing of an insertion loop (Z-loop) is required for homodimerization upon binding to the unmethylated CpG ligand leading to its activation. Interacts with MYD88 via their respective TIR domains. Interacts with BTK. Interacts (via transmembrane domain) with UNC93B1. Interacts with CD300LH; the interaction may promote full activation of TLR9-triggered innate responses. Interacts with CNPY3 and HSP90B1; this interaction is required for proper folding in the endoplasmic reticulum. Interacts with SMPDL3B. Interacts with CD82; this interaction is essential for TLR9-dependent myddosome formation in response to CpG stimulation. Activated by proteolytic cleavage of the flexible loop between repeats LRR14 and LRR15 within the ectodomain. Cleavage requires UNC93B1. Proteolytically processed by first removing the majority of the ectodomain by either asparagine endopeptidase (AEP) or a cathepsin followed by a trimming event that is solely cathepsin mediated and required for optimal receptor signaling. In terms of processing, palmitoylated by ZDHHC3 in the Golgi regulates TLR9 trafficking from the Golgi to endosomes. Depalmitoylation by PPT1 controls the release of TLR9 from UNC93B1 in endosomes.

It localises to the endoplasmic reticulum membrane. Its subcellular location is the endosome. The protein localises to the lysosome. It is found in the cytoplasmic vesicle. The protein resides in the phagosome. Functionally, key component of innate and adaptive immunity. TLRs (Toll-like receptors) control host immune response against pathogens through recognition of molecular patterns specific to microorganisms. TLR9 is a nucleotide-sensing TLR which is activated by unmethylated cytidine-phosphate-guanosine (CpG) dinucleotides. Acts via MYD88 and TRAF6, leading to NF-kappa-B activation, cytokine secretion and the inflammatory response. Upon CpG stimulation, induces B-cell proliferation, activation, survival and antibody production. The protein is Toll-like receptor 9 (TLR9) of Ovis aries (Sheep).